A 58-amino-acid chain; its full sequence is MPGPCCNDVCECAAGGCKTGCVCTSCRCSPCDKCTSGCKCPSKEECAKTCSKPCECCP.

The interval 1 to 29 (MPGPCCNDVCECAAGGCKTGCVCTSCRCS) is beta. A divalent metal cation contacts are provided by C5, C6, C10, C12, C17, C21, C23, C26, C28, C31, C34, C38, C40, C46, C50, C54, C56, and C57. The interval 30-58 (PCDKCTSGCKCPSKEECAKTCSKPCECCP) is alpha.

Its function is as follows. Metallothioneins have a high content of cysteine residues that bind various heavy metals. Class I MTS in crustacea are involved in the sequestration of elevated levels of heavy-metal ions. The polypeptide is Metallothionein (Astacus astacus (Noble crayfish)).